The sequence spans 301 residues: Ribosomal RNA small subunit methyltransferase H (301 aa).

S-adenosyl-L-methionine contacts are provided by residues 35 to 37, D55, F84, D105, and Q112; that span reads GGH.

It belongs to the methyltransferase superfamily. RsmH family.

Its subcellular location is the cytoplasm. The catalysed reaction is cytidine(1402) in 16S rRNA + S-adenosyl-L-methionine = N(4)-methylcytidine(1402) in 16S rRNA + S-adenosyl-L-homocysteine + H(+). Its function is as follows. Specifically methylates the N4 position of cytidine in position 1402 (C1402) of 16S rRNA. This chain is Ribosomal RNA small subunit methyltransferase H, found in Chloroflexus aurantiacus (strain ATCC 29366 / DSM 635 / J-10-fl).